The primary structure comprises 1098 residues: MREAKIAPLSNYGLQWCFEQLGKEEFQTFKALLKEHASESAACSFPLVQVDRADAESLASLLHEHCRASLAWKTSTDIFEKMSLSALSEMARDEMKKYLLAEISEDSAPTKTDQGPSMKEVPGPREDPQDSRDYRIHVMTTFSTRLDTPQRFEEFASECPDAHALSGAFNPDPSGGFRPLTVVLHGPPGVGKSSLARRLLLFWAQGDLYKGLFSYVFLLRARDLQGSRETSFAELISKEWPDAPVPVEKVLSQPERLLIVVDGLEELELTFRDQDSSLLADWAERQPAPVLAHSLLKKVLLPECALLLTVQDAGLQRLQALLRSPRYLWVGGLSVENRMQLLLGGGKHCRRKTCAWHAGADHQEVLDKCQVPVVCALVREALELQGEPGKGLPVPGHTLTGLYATFVFQRLAPKDAGWRALSGEERGALKGLCRLAADGVWNAKFVFDGDDLGVHGLQGPELSALQQASILLPDGHCGRGHAFSHLSLQEFFAALFYVLRGVEGDGEGYPLFPQSTKSLTELRHIDLNVQLVQMKRFLFGLVSKEVMRALETLLGCPVRPVAKQQLLHWICLVGQHPAAAASPDLLEAFYCLFEAQDDEFVRLALNGFQEVWLQLNRPMDLTVSSFCLRRCQHLRKVRLDVRGTPKDEFAEAWSGAPQGLKIKTLDEHWEDLCSVLSTHPNLRQLDLSGSVLSKEAMKTLCVKLRQPACKIQNLIFKGARVTPGLRHLWMTLIINRNITRLDLTGCRLREEDVQTACEALRHPQCALESLRLDRCGLTPASCREISQVLATSGSLKSLSLTGNKVADQGVKSLCDALKVTPCTLQKLILGSCGLTAATCQDLASALIENQGLTHLSLSGDELGSKGMSLLCRAVKLSSCGLQKLALNACSLDVAGCGFLAFALMGNRHLTHLSLSMNPLEDPGMNLLCEVMMEPSCPLRDLDLVNCRLTASCCKSLSNVITRSPRLRSLDLAANALGDEGIAALCEGLKQKNTLTRLGLEACGLTSEGCKALSAALTCSRHLASLNLMRNDLGPRGMTTLCSAFMHPTSNLQTIGLWKEQYPARVRRLLEQVQRLKPHVVISDAWYTEEEEDGPCWRI.

One can recognise a Pyrin domain in the interval 1-97 (MREAKIAPLS…SEMARDEMKK (97 aa)). A disordered region spans residues 104–131 (SEDSAPTKTDQGPSMKEVPGPREDPQDS). Residues 122–131 (PGPREDPQDS) show a composition bias toward basic and acidic residues. In terms of domain architecture, NACHT spans 180–503 (LTVVLHGPPG…ALFYVLRGVE (324 aa)). An ATP-binding site is contributed by 186 to 193 (GPPGVGKS). LRR repeat units follow at residues 851–871 (GLTH…SLLC), 880–900 (GLQK…GFLA), 908–928 (HLTH…NLLC), 937–958 (PLRD…SLSN), 965–985 (RLRS…AALC), 993–1013 (TLTR…KALS), and 1021–1041 (HLAS…TTLC).

Belongs to the NLRP family. Component of the subcortical maternal complex (SCMC), at least composed of NLRP5, KHDC3, OOEP, and TLE6. Within the complex, interacts with OOEP, KHDC3 and TLE6. The SCMC may facilitate translocation of its components between the nuclear and cytoplasmic compartments. As part of the SCMC interacts with the SCMC-associated protein ZBED3. As part of the SCMC interacts with the SCMC-associated protein CFL1/Cofilin-1. Interacts with PRKCE. Interacts with TUBB3 at cytoskeleton microtubules. In terms of processing, phosphorylated by PRKCE. Oocyte-specific.

It is found in the cytoplasm. The protein resides in the cytoplasmic vesicle. The protein localises to the secretory vesicle. It localises to the cortical granule. Its subcellular location is the mitochondrion. It is found in the nucleus. The protein resides in the nucleolus. The protein localises to the golgi apparatus. Its function is as follows. Component of the subcortical maternal complex (SCMC), a multiprotein complex that plays a key role in early embryonic development. The SCMC complex is a structural constituent of cytoplasmic lattices, which consist in fibrous structures found in the cytoplasm of oocytes and preimplantation embryos. They are required to store maternal proteins critical for embryonic development, such as proteins that control epigenetic reprogramming of the preimplantation embryo, and prevent their degradation or activation. Required for the localization of cortical granules to the cortex of oocytes, via association with the cortical actin scaffold. Required for cortical actin clearance prior to oocyte exocytosis and prevention of polyspermy. Involved in regulating post-fertilization Ca(2+) release and endoplasmic reticulum storage (ER) storage via regulation of cellular localization. May be involved in the localization of mitochondria to the cytoplasm and perinuclear region in oocytes and early stage embryos, independent of its role in CPL formation. The protein is NACHT, LRR and PYD domains-containing protein 5 (NLRP5) of Bos taurus (Bovine).